The chain runs to 353 residues: Protein U67 (353 aa).

This sequence belongs to the herpesviridae UL95 family.

The polypeptide is Protein U67 (U67) (Human herpesvirus 6A (strain Uganda-1102) (HHV-6 variant A)).